We begin with the raw amino-acid sequence, 131 residues long: MSWQTYVDEHLMCEIEGHHLASAAILGHDGTVWAQSADFPQFKPEEITGIMKDFDEPGHLAPTGMFVATAKYMVIQGEPGAVIRGKKGAGGITIKKTGQALVVGIYDEPMTPGQCNMVVERLGDYLLKQGL.

Residues Cys13 and Cys115 are joined by a disulfide bond. Residues 81 to 97 (AVIRGKKGAGGITIKKT) carry the Involved in PIP2 interaction motif. Thr111 bears the Phosphothreonine mark.

Belongs to the profilin family. As to quaternary structure, occurs in many kinds of cells as a complex with monomeric actin in a 1:1 ratio. Phosphorylated by MAP kinases.

The protein localises to the cytoplasm. It localises to the cytoskeleton. Binds to actin and affects the structure of the cytoskeleton. At high concentrations, profilin prevents the polymerization of actin, whereas it enhances it at low concentrations. This chain is Profilin-7, found in Phleum pratense (Common timothy).